Here is a 379-residue protein sequence, read N- to C-terminus: Queuine tRNA-ribosyltransferase (379 aa).

D94 (proton acceptor) is an active-site residue. Residues D94–F98, D148, Q191, and G218 contribute to the substrate site. The RNA binding stretch occupies residues G249–A255. The active-site Nucleophile is the D268. The interval T273 to R277 is RNA binding; important for wobble base 34 recognition. Zn(2+)-binding residues include C306, C308, C311, and H337.

This sequence belongs to the queuine tRNA-ribosyltransferase family. As to quaternary structure, homodimer. Within each dimer, one monomer is responsible for RNA recognition and catalysis, while the other monomer binds to the replacement base PreQ1. The cofactor is Zn(2+).

The catalysed reaction is 7-aminomethyl-7-carbaguanine + guanosine(34) in tRNA = 7-aminomethyl-7-carbaguanosine(34) in tRNA + guanine. It participates in tRNA modification; tRNA-queuosine biosynthesis. Catalyzes the base-exchange of a guanine (G) residue with the queuine precursor 7-aminomethyl-7-deazaguanine (PreQ1) at position 34 (anticodon wobble position) in tRNAs with GU(N) anticodons (tRNA-Asp, -Asn, -His and -Tyr). Catalysis occurs through a double-displacement mechanism. The nucleophile active site attacks the C1' of nucleotide 34 to detach the guanine base from the RNA, forming a covalent enzyme-RNA intermediate. The proton acceptor active site deprotonates the incoming PreQ1, allowing a nucleophilic attack on the C1' of the ribose to form the product. After dissociation, two additional enzymatic reactions on the tRNA convert PreQ1 to queuine (Q), resulting in the hypermodified nucleoside queuosine (7-(((4,5-cis-dihydroxy-2-cyclopenten-1-yl)amino)methyl)-7-deazaguanosine). In Staphylococcus haemolyticus (strain JCSC1435), this protein is Queuine tRNA-ribosyltransferase.